We begin with the raw amino-acid sequence, 150 residues long: Small ribosomal subunit protein eS19 (150 aa).

It belongs to the eukaryotic ribosomal protein eS19 family. Part of the 30S ribosomal subunit.

Functionally, may be involved in maturation of the 30S ribosomal subunit. This Pyrococcus abyssi (strain GE5 / Orsay) protein is Small ribosomal subunit protein eS19 (rps19e).